The chain runs to 436 residues: MEMKNVKGTKDYLPEEQVLRNKIKRACEDTFERYGCKPLETPTLNMYELMSYKYGGGDEILKEIYTLQDQGKRNLALRYDLTIPFAKVVAMNPNIRLPFKRYEIGKVFRDGPIKQGRFREFIQCDVDIVGVESVMAEAELMSMAFELFRTLNLEVTIQYNNRKLLNGILESINIPTERTSDVILSLDKIEKIGIDGVRKDVLERGISEEMADTICNTVLSCLKLTIADFKEAFNNPLVADGVNELQQLQQYLIALGINENAIFNPFLARGLTMYTGTVYEIFLKDGSITSSIGSGGRYDNIIGAFRGDNMNYPTVGISFGLDVIYTALSQKETISSTADVFIIPLGTELQCLQIAQQLRSTTSLKVELELAGRKLKRALNYANKENIPYVLIIGEDELSTETVVLRNMKEGSEVKVPLSSLKDNTFNNYCNIPIKL.

Belongs to the class-II aminoacyl-tRNA synthetase family. In terms of assembly, homodimer.

The protein localises to the cytoplasm. It carries out the reaction tRNA(His) + L-histidine + ATP = L-histidyl-tRNA(His) + AMP + diphosphate + H(+). The protein is Histidine--tRNA ligase 1 of Bacillus cereus (strain ATCC 10987 / NRS 248).